Reading from the N-terminus, the 258-residue chain is Putative gamma-secretase subunit APH-1C (258 aa).

The next 7 helical transmembrane spans lie at 5 to 25, 32 to 52, 71 to 91, 116 to 136, 161 to 181, 187 to 207, and 214 to 234; these read VFFG…LFTI, VIFL…SSMF, LLIF…LAYY, LLAY…SFVN, AFMT…FFDG, WYTL…TFLS, and LVTA…VAGG.

The protein belongs to the APH-1 family. Potential component of the gamma-secretase complex.

The protein localises to the membrane. In terms of biological role, potential subunit of the gamma-secretase complex, an endoprotease complex that catalyzes the intramembrane cleavage of integral proteins such as Notch receptors and APP (amyloid-beta precursor protein). This is Putative gamma-secretase subunit APH-1C (Aph1c) from Mus musculus (Mouse).